The sequence spans 137 residues: Putative pre-16S rRNA nuclease (137 aa).

It belongs to the YqgF nuclease family.

It localises to the cytoplasm. In terms of biological role, could be a nuclease involved in processing of the 5'-end of pre-16S rRNA. This Buchnera aphidicola subsp. Schizaphis graminum (strain Sg) protein is Putative pre-16S rRNA nuclease.